A 119-amino-acid polypeptide reads, in one-letter code: MVRNNEIGARPNKYWPVVAAVVAICLFGFLTVTNQKHATQSGDNIHKFANGGQYRDGSKSIKYNCNNPRAYNGSSSNITFSQLFLPVLLIGAALYAYLWFTRPDCSVTCRGDCCRSYGG.

Over 1–13 (MVRNNEIGARPNK) the chain is Cytoplasmic. A helical transmembrane segment spans residues 14–34 (YWPVVAAVVAICLFGFLTVTN). At 35-79 (QKHATQSGDNIHKFANGGQYRDGSKSIKYNCNNPRAYNGSSSNIT) the chain is on the lumenal side. Residues 80–100 (FSQLFLPVLLIGAALYAYLWF) traverse the membrane as a helical segment. The Cytoplasmic segment spans residues 101–119 (TRPDCSVTCRGDCCRSYGG).

This sequence belongs to the virgaviridae/benyvirus TGB2 movement protein family. In terms of assembly, interacts with movement protein TGB3. TGB1-TGB3-TGB2 complex formation is enhanced by ATP hydrolysis.

The protein resides in the host cell junction. The protein localises to the host plasmodesma. It localises to the host endoplasmic reticulum membrane. Its subcellular location is the host cytoplasm. It is found in the host cytoskeleton. The protein resides in the host chloroplast envelope. Its function is as follows. Participates in the transport of viral genome to neighboring plant cells directly through plasmodesmata, without any budding. TGBp2 and TGBp3 are necessary for intracellular delivery of TGBp1-containing vRNPs to plasmodesmata. Can gate plasmodesmata and increase their size exclusion limit. To a lesser extent than TGB3, induces host actin cytoskeleton network thickening, which probably plays a major role in virus cell-to-cell movement. Binds ssRNA in a sequence non-specific manner. This is Movement protein TGB2 from Potato mop-top virus (isolate Potato/Sweden/Sw) (PMTV).